We begin with the raw amino-acid sequence, 218 residues long: Protein-methionine-sulfoxide reductase heme-binding subunit MsrQ (218 aa).

Helical transmembrane passes span 12–32 (TLIK…LALF), 82–102 (MLGL…LWFD), 118–138 (PFIT…ITST), 150–170 (WQWL…HYWW), and 180–200 (QPII…FWAW).

Belongs to the MsrQ family. As to quaternary structure, heterodimer of a catalytic subunit (MsrP) and a heme-binding subunit (MsrQ). FMN is required as a cofactor. It depends on heme b as a cofactor.

The protein localises to the cell inner membrane. Part of the MsrPQ system that repairs oxidized periplasmic proteins containing methionine sulfoxide residues (Met-O), using respiratory chain electrons. Thus protects these proteins from oxidative-stress damage caused by reactive species of oxygen and chlorine generated by the host defense mechanisms. MsrPQ is essential for the maintenance of envelope integrity under bleach stress, rescuing a wide series of structurally unrelated periplasmic proteins from methionine oxidation. MsrQ provides electrons for reduction to the reductase catalytic subunit MsrP, using the quinone pool of the respiratory chain. This chain is Protein-methionine-sulfoxide reductase heme-binding subunit MsrQ, found in Herminiimonas arsenicoxydans.